Consider the following 412-residue polypeptide: Serine hydroxymethyltransferase (412 aa).

(6S)-5,6,7,8-tetrahydrofolate-binding positions include leucine 112 and 116–118 (GHL). The residue at position 221 (lysine 221) is an N6-(pyridoxal phosphate)lysine. Glutamate 237 lines the (6S)-5,6,7,8-tetrahydrofolate pocket.

It belongs to the SHMT family. Homodimer. Requires pyridoxal 5'-phosphate as cofactor.

The protein localises to the cytoplasm. It carries out the reaction (6R)-5,10-methylene-5,6,7,8-tetrahydrofolate + glycine + H2O = (6S)-5,6,7,8-tetrahydrofolate + L-serine. Its pathway is one-carbon metabolism; tetrahydrofolate interconversion. The protein operates within amino-acid biosynthesis; glycine biosynthesis; glycine from L-serine: step 1/1. In terms of biological role, catalyzes the reversible interconversion of serine and glycine with tetrahydrofolate (THF) serving as the one-carbon carrier. This reaction serves as the major source of one-carbon groups required for the biosynthesis of purines, thymidylate, methionine, and other important biomolecules. Also exhibits THF-independent aldolase activity toward beta-hydroxyamino acids, producing glycine and aldehydes, via a retro-aldol mechanism. This chain is Serine hydroxymethyltransferase, found in Malacoplasma penetrans (strain HF-2) (Mycoplasma penetrans).